We begin with the raw amino-acid sequence, 160 residues long: Nucleotide-binding protein VFMJ11_1323 (160 aa).

Belongs to the YajQ family.

Functionally, nucleotide-binding protein. This Aliivibrio fischeri (strain MJ11) (Vibrio fischeri) protein is Nucleotide-binding protein VFMJ11_1323.